The primary structure comprises 349 residues: Alanine racemase (349 aa).

The Proton acceptor; specific for D-alanine role is filled by Lys35. Residue Lys35 is modified to N6-(pyridoxal phosphate)lysine. Substrate is bound at residue Arg130. The active-site Proton acceptor; specific for L-alanine is Tyr244. A substrate-binding site is contributed by Met292.

It belongs to the alanine racemase family. Requires pyridoxal 5'-phosphate as cofactor.

It catalyses the reaction L-alanine = D-alanine. Its pathway is amino-acid biosynthesis; D-alanine biosynthesis; D-alanine from L-alanine: step 1/1. Catalyzes the interconversion of L-alanine and D-alanine. May also act on other amino acids. This chain is Alanine racemase (alr), found in Cereibacter sphaeroides (strain ATCC 17025 / ATH 2.4.3) (Rhodobacter sphaeroides).